An 864-amino-acid chain; its full sequence is Leucine--tRNA ligase (864 aa).

A 'HIGH' region motif is present at residues 42 to 52 (PYPSGKLHMGH). The 'KMSKS' region signature appears at 624-628 (KMSKS). Lys627 provides a ligand contact to ATP.

Belongs to the class-I aminoacyl-tRNA synthetase family.

Its subcellular location is the cytoplasm. It catalyses the reaction tRNA(Leu) + L-leucine + ATP = L-leucyl-tRNA(Leu) + AMP + diphosphate. This chain is Leucine--tRNA ligase, found in Paraburkholderia phymatum (strain DSM 17167 / CIP 108236 / LMG 21445 / STM815) (Burkholderia phymatum).